A 458-amino-acid chain; its full sequence is 3-isopropylmalate dehydratase large subunit (458 aa).

[4Fe-4S] cluster-binding residues include cysteine 339, cysteine 399, and cysteine 402.

This sequence belongs to the aconitase/IPM isomerase family. LeuC type 1 subfamily. As to quaternary structure, heterodimer of LeuC and LeuD. Requires [4Fe-4S] cluster as cofactor.

The catalysed reaction is (2R,3S)-3-isopropylmalate = (2S)-2-isopropylmalate. Its pathway is amino-acid biosynthesis; L-leucine biosynthesis; L-leucine from 3-methyl-2-oxobutanoate: step 2/4. Catalyzes the isomerization between 2-isopropylmalate and 3-isopropylmalate, via the formation of 2-isopropylmaleate. This chain is 3-isopropylmalate dehydratase large subunit, found in Lactococcus lactis subsp. cremoris (strain SK11).